We begin with the raw amino-acid sequence, 416 residues long: Tyrosine--tRNA ligase (416 aa).

Residue Y40 coordinates L-tyrosine. The 'HIGH' region motif lies at 45–54 (ATAASLHVGH). The L-tyrosine site is built by Y177 and Q181. Residues 237–241 (KMGKS) carry the 'KMSKS' region motif. K240 lines the ATP pocket. The 66-residue stretch at 351–416 (LSVAHFLVAA…RKKHKLVRLS (66 aa)) folds into the S4 RNA-binding domain.

The protein belongs to the class-I aminoacyl-tRNA synthetase family. TyrS type 1 subfamily. As to quaternary structure, homodimer.

The protein localises to the cytoplasm. It catalyses the reaction tRNA(Tyr) + L-tyrosine + ATP = L-tyrosyl-tRNA(Tyr) + AMP + diphosphate + H(+). Its function is as follows. Catalyzes the attachment of tyrosine to tRNA(Tyr) in a two-step reaction: tyrosine is first activated by ATP to form Tyr-AMP and then transferred to the acceptor end of tRNA(Tyr). The chain is Tyrosine--tRNA ligase from Cereibacter sphaeroides (strain KD131 / KCTC 12085) (Rhodobacter sphaeroides).